The following is a 466-amino-acid chain: 3-isopropylmalate dehydratase large subunit (466 aa).

Residues Cys347, Cys407, and Cys410 each coordinate [4Fe-4S] cluster.

The protein belongs to the aconitase/IPM isomerase family. LeuC type 1 subfamily. As to quaternary structure, heterodimer of LeuC and LeuD. [4Fe-4S] cluster is required as a cofactor.

The enzyme catalyses (2R,3S)-3-isopropylmalate = (2S)-2-isopropylmalate. It participates in amino-acid biosynthesis; L-leucine biosynthesis; L-leucine from 3-methyl-2-oxobutanoate: step 2/4. Functionally, catalyzes the isomerization between 2-isopropylmalate and 3-isopropylmalate, via the formation of 2-isopropylmaleate. The polypeptide is 3-isopropylmalate dehydratase large subunit (Shewanella piezotolerans (strain WP3 / JCM 13877)).